The sequence spans 359 residues: Serine/threonine-protein kinase SAPK7 (359 aa).

Residues 4–260 form the Protein kinase domain; that stretch reads YELLKDIGAG…IREIRNHPWF (257 aa). ATP contacts are provided by residues 10–18 and Lys33; that span reads IGAGNFGVA. The Proton acceptor role is filled by Asp123. Residues 299–359 are disordered; it reads EEARTPPRSS…VHASGEFQLS (61 aa). Over residues 331–343 the composition is skewed to acidic residues; the sequence is EEQEEEEDAEDEY.

It belongs to the protein kinase superfamily. Ser/Thr protein kinase family. In terms of processing, may be phosphorylated. In terms of tissue distribution, weakly expressed in roots. Expressed in roots of young seedlings.

Its subcellular location is the cytoplasm. It localises to the nucleus. The enzyme catalyses L-seryl-[protein] + ATP = O-phospho-L-seryl-[protein] + ADP + H(+). The catalysed reaction is L-threonyl-[protein] + ATP = O-phospho-L-threonyl-[protein] + ADP + H(+). Its activity is regulated as follows. Activated by hyperosmotic stress. Its function is as follows. May play a role in signal transduction of hyperosmotic response. This chain is Serine/threonine-protein kinase SAPK7 (SAPK7), found in Oryza sativa subsp. japonica (Rice).